A 693-amino-acid chain; its full sequence is Elongation factor G (693 aa).

The 275-residue stretch at 8–282 (EKTRNIGIMA…AVIDYLPSPL (275 aa)) folds into the tr-type G domain. GTP is bound by residues 17 to 24 (AHIDAGKT), 81 to 85 (DTPGH), and 135 to 138 (NKMD).

The protein belongs to the TRAFAC class translation factor GTPase superfamily. Classic translation factor GTPase family. EF-G/EF-2 subfamily.

It localises to the cytoplasm. Catalyzes the GTP-dependent ribosomal translocation step during translation elongation. During this step, the ribosome changes from the pre-translocational (PRE) to the post-translocational (POST) state as the newly formed A-site-bound peptidyl-tRNA and P-site-bound deacylated tRNA move to the P and E sites, respectively. Catalyzes the coordinated movement of the two tRNA molecules, the mRNA and conformational changes in the ribosome. The polypeptide is Elongation factor G (Staphylococcus aureus (strain Mu3 / ATCC 700698)).